The following is a 207-amino-acid chain: LexA repressor (207 aa).

Positions 28 to 48 (RAEIARELGFRSANAAEEHLK) form a DNA-binding region, H-T-H motif. Residues serine 124 and lysine 161 each act as for autocatalytic cleavage activity in the active site.

This sequence belongs to the peptidase S24 family. Homodimer.

It carries out the reaction Hydrolysis of Ala-|-Gly bond in repressor LexA.. Functionally, represses a number of genes involved in the response to DNA damage (SOS response), including recA and lexA. In the presence of single-stranded DNA, RecA interacts with LexA causing an autocatalytic cleavage which disrupts the DNA-binding part of LexA, leading to derepression of the SOS regulon and eventually DNA repair. The chain is LexA repressor from Vibrio vulnificus (strain CMCP6).